An 83-amino-acid chain; its full sequence is Protein CASPARIAN STRIP INTEGRITY FACTOR 2 (83 aa).

The first 28 residues, 1-28, serve as a signal peptide directing secretion; sequence MGLLPLVKKLGFIIFLLVSASAFALCSA. The segment at 61-83 is disordered; it reads SRDYGHSSPKPKLVRPPFKLIPN. Sulfotyrosine is present on Tyr-64. Pro-69 and Pro-71 each carry hydroxyproline.

In terms of assembly, interacts with the specific receptor kinases GSO1 and GSO2. In terms of tissue distribution, expressed exclusively in the root stele.

Its function is as follows. Peptide hormone required for contiguous Casparian strip diffusion barrier formation in roots via the regulation of CASPs protein expression and distribution in a GSO1-GSO2 signaling pathway. The Casparian strip is required for ion homeostasis (e.g. iron and potassium ions). This chain is Protein CASPARIAN STRIP INTEGRITY FACTOR 2, found in Arabidopsis thaliana (Mouse-ear cress).